Reading from the N-terminus, the 338-residue chain is Protein-glutamate methylesterase/protein-glutamine glutaminase 2 (338 aa).

A Response regulatory domain is found at 2-119; the sequence is RIGIVNDSAL…SDTKLAAGPL (118 aa). The residue at position 53 (D53) is a 4-aspartylphosphate. The 186-residue stretch at 145 to 330 folds into the CheB-type methylesterase domain; that stretch reads PTPTAPRLVA…PLQKIAPRLV (186 aa). Residues S158, H185, and D278 contribute to the active site.

This sequence belongs to the CheB family. In terms of processing, phosphorylated by CheA. Phosphorylation of the N-terminal regulatory domain activates the methylesterase activity.

The protein localises to the cytoplasm. It carries out the reaction [protein]-L-glutamate 5-O-methyl ester + H2O = L-glutamyl-[protein] + methanol + H(+). It catalyses the reaction L-glutaminyl-[protein] + H2O = L-glutamyl-[protein] + NH4(+). Involved in chemotaxis. Part of a chemotaxis signal transduction system that modulates chemotaxis in response to various stimuli. Catalyzes the demethylation of specific methylglutamate residues introduced into the chemoreceptors (methyl-accepting chemotaxis proteins or MCP) by CheR. Also mediates the irreversible deamidation of specific glutamine residues to glutamic acid. The chain is Protein-glutamate methylesterase/protein-glutamine glutaminase 2 from Cupriavidus metallidurans (strain ATCC 43123 / DSM 2839 / NBRC 102507 / CH34) (Ralstonia metallidurans).